A 423-amino-acid chain; its full sequence is Adenylosuccinate synthetase (423 aa).

Residues Gly-12–Lys-18 and Gly-40–Thr-42 contribute to the GTP site. Asp-13 acts as the Proton acceptor in catalysis. Residues Asp-13 and Gly-40 each coordinate Mg(2+). IMP contacts are provided by residues Asp-13 to Lys-16, Asn-38 to His-41, Thr-128, Arg-142, Gln-223, Thr-238, and Arg-302. The active-site Proton donor is the His-41. Thr-298–Arg-304 lines the substrate pocket. Residues Arg-304, Arg-330 to Asp-332, and Cys-412 to Gly-414 each bind GTP.

It belongs to the adenylosuccinate synthetase family. As to quaternary structure, homodimer. Mg(2+) serves as cofactor.

The protein localises to the cytoplasm. The enzyme catalyses IMP + L-aspartate + GTP = N(6)-(1,2-dicarboxyethyl)-AMP + GDP + phosphate + 2 H(+). Its pathway is purine metabolism; AMP biosynthesis via de novo pathway; AMP from IMP: step 1/2. Functionally, plays an important role in the de novo pathway of purine nucleotide biosynthesis. Catalyzes the first committed step in the biosynthesis of AMP from IMP. This Dehalococcoides mccartyi (strain ATCC BAA-2100 / JCM 16839 / KCTC 5957 / BAV1) protein is Adenylosuccinate synthetase.